The following is a 634-amino-acid chain: AAl-toxin cluster-specific transcription factor ALT13 (634 aa).

A DNA-binding region (zn(2)-C6 fungal-type) is located at residues Cys30 to Cys56. Residues Arg66–Ala89 are disordered. The span at Val69–Gly81 shows a compositional bias: polar residues.

It localises to the nucleus. Functionally, transcription factor that regulates the expression of the gene cluster that mediates the biosynthesis of AAL-toxins, sphinganine-analog mycotoxins responsible for Alternaria stem canker on tomato by the tomato pathotype. In Alternaria alternata (Alternaria rot fungus), this protein is AAl-toxin cluster-specific transcription factor ALT13.